Consider the following 135-residue polypeptide: MTKSELVEKLAARFPQLLLRDADISVKTILDAMSEALADGHRIEIRGFGSFGLNKRPPRVGRNPKSGERVLVPEKRVPHFKAGKELRERVDRTVTQGGGMNGNGHAPHGKTGQSQLGSQSPASLHDDGQLNLVRS.

Basic and acidic residues predominate over residues 83-92 (GKELRERVDR). Residues 83 to 135 (GKELRERVDRTVTQGGGMNGNGHAPHGKTGQSQLGSQSPASLHDDGQLNLVRS) are disordered. Residues 111-122 (TGQSQLGSQSPA) show a composition bias toward polar residues.

It belongs to the bacterial histone-like protein family. In terms of assembly, heterodimer of an alpha and a beta chain.

Its function is as follows. This protein is one of the two subunits of integration host factor, a specific DNA-binding protein that functions in genetic recombination as well as in transcriptional and translational control. The polypeptide is Integration host factor subunit beta (Cupriavidus metallidurans (strain ATCC 43123 / DSM 2839 / NBRC 102507 / CH34) (Ralstonia metallidurans)).